The following is a 187-amino-acid chain: UPF0340 protein SPT_0687 (187 aa).

It belongs to the UPF0340 family.

The sequence is that of UPF0340 protein SPT_0687 from Streptococcus pneumoniae (strain Taiwan19F-14).